Consider the following 288-residue polypeptide: Polyamine aminopropyltransferase (288 aa).

The PABS domain maps to 9 to 242; it reads SGWLDEYHQG…GLWSWAFASM (234 aa). Residue Gln-36 participates in S-methyl-5'-thioadenosine binding. Spermidine-binding residues include His-67 and Asp-91. S-methyl-5'-thioadenosine-binding positions include Glu-111 and 143–144; that span reads NG. Asp-162 (proton acceptor) is an active-site residue. Pro-169 is a binding site for S-methyl-5'-thioadenosine.

This sequence belongs to the spermidine/spermine synthase family. In terms of assembly, homodimer or homotetramer.

The protein localises to the cytoplasm. It carries out the reaction S-adenosyl 3-(methylsulfanyl)propylamine + putrescine = S-methyl-5'-thioadenosine + spermidine + H(+). It participates in amine and polyamine biosynthesis; spermidine biosynthesis; spermidine from putrescine: step 1/1. Its function is as follows. Catalyzes the irreversible transfer of a propylamine group from the amino donor S-adenosylmethioninamine (decarboxy-AdoMet) to putrescine (1,4-diaminobutane) to yield spermidine. The sequence is that of Polyamine aminopropyltransferase from Prochlorococcus marinus (strain NATL1A).